The following is a 754-amino-acid chain: Disintegrin and metalloproteinase domain-containing protein 32 (754 aa).

Residues 1–22 (MLGAMLHTLLLLLLAELGALLA) form the signal peptide. Serine 23 carries the post-translational modification Phosphoserine. Residues 23–176 (SGPESQSSFL…TNYGILINKK (154 aa)) constitute a propeptide that is removed on maturation. N-linked (GlcNAc...) asparagine glycosylation is present at asparagine 126. Over 177-689 (PKSPFKNLFP…ERASKNQEKK (513 aa)) the chain is Extracellular. A Peptidase M12B domain is found at 187-384 (LYLEMSIVVD…EGAKCLQNKP (198 aa)). 4 disulfide bridges follow: cysteine 296-cysteine 379, cysteine 338-cysteine 363, cysteine 340-cysteine 345, and cysteine 454-cysteine 475. Asparagine 362, asparagine 469, asparagine 570, and asparagine 571 each carry an N-linked (GlcNAc...) asparagine glycan. One can recognise a Disintegrin domain in the interval 391 to 483 (AAVCGNGKVE…NCPPDVTINN (93 aa)). One can recognise an EGF-like domain in the interval 628–660 (QSKTCSSKCHGNGVCNSHGVCHCNAGYSPPNCQ). Intrachain disulfides connect cysteine 632-cysteine 642, cysteine 636-cysteine 648, and cysteine 650-cysteine 659. The chain crosses the membrane as a helical span at residues 690–710 (WLLSLYIVLIILASVFLIGTG). Residues 711–754 (WKGLKQCGSKEEESMSSESKSEDSTYTYVSRSTSETSSMTSTSS) are Cytoplasmic-facing. A compositionally biased stretch (basic and acidic residues) spans 720 to 733 (KEEESMSSESKSED). Residues 720–754 (KEEESMSSESKSEDSTYTYVSRSTSETSSMTSTSS) form a disordered region. Residues 734 to 754 (STYTYVSRSTSETSSMTSTSS) show a composition bias toward low complexity.

As to expression, expressed in sperm (at protein level). Highly expressed in the testis and weakly expressed in the epididymis, brain and heart.

It localises to the membrane. Functionally, may play a role in sperm development and fertilization This is a non-catalytic metalloprotease-like protein. The sequence is that of Disintegrin and metalloproteinase domain-containing protein 32 from Mus musculus (Mouse).